The primary structure comprises 265 residues: Type II pantothenate kinase (265 aa).

6-13 (DAGGTLIK) contributes to the ATP binding site. Residue E70 is the Proton acceptor of the active site. Residues T99, 121–125 (GGMIQ), Y137, and S225 contribute to the ATP site.

The protein belongs to the type II pantothenate kinase family. Homodimer.

Its subcellular location is the cytoplasm. The catalysed reaction is (R)-pantothenate + ATP = (R)-4'-phosphopantothenate + ADP + H(+). It functions in the pathway cofactor biosynthesis; coenzyme A biosynthesis; CoA from (R)-pantothenate: step 1/5. In terms of biological role, catalyzes the phosphorylation of pantothenate (Pan), the first step in CoA biosynthesis. This is Type II pantothenate kinase from Staphylococcus epidermidis (strain ATCC 12228 / FDA PCI 1200).